The sequence spans 756 residues: Xylosyl- and glucuronyltransferase LARGE1 (756 aa).

Residues M1–K10 lie on the Cytoplasmic side of the membrane. A helical; Signal-anchor for type II membrane protein membrane pass occupies residues F11–S31. Residues G32–S756 are Lumenal-facing. 2 disordered regions span residues S43 to M69 and R81 to G109. Over residues P44 to S58 the composition is skewed to polar residues. Positions R53–R95 form a coiled coil. The span at Q59–M69 shows a compositional bias: basic and acidic residues. Residues N97, N122, and N148 are each glycosylated (N-linked (GlcNAc...) asparagine). Residues I138–R413 are xylosyltransferase activity. Mn(2+)-binding residues include D242 and D244. N-linked (GlcNAc...) asparagine glycosylation occurs at N272. The interval R414–S756 is glucuronyltransferase activity. Residues D563 and D565 each contribute to the Mn(2+) site.

It in the C-terminal section; belongs to the glycosyltransferase 49 family. In the N-terminal section; belongs to the glycosyltransferase 8 family. As to quaternary structure, interacts with DAG1 (via the N-terminal domain of alpha-DAG1); the interaction increases binding of DAG1 to laminin. Interacts with B4GAT1. Mn(2+) serves as cofactor. In terms of tissue distribution, ubiquitous. Highest expression in heart, brain and skeletal muscle.

It localises to the golgi apparatus membrane. The enzyme catalyses 3-O-[beta-D-GlcA-(1-&gt;3)-beta-D-Xyl-(1-&gt;4)-Rib-ol-P-Rib-ol-P-3-beta-D-GalNAc-(1-&gt;3)-beta-D-GlcNAc-(1-&gt;4)-(O-6-P-alpha-D-Man)]-Thr-[protein] + UDP-alpha-D-xylose = 3-O-[alpha-D-Xyl-(1-&gt;3)-beta-D-GlcA-(1-&gt;4)-beta-D-Xyl-(1-&gt;4)-Rib-ol-P-Rib-ol-P-3-beta-D-GalNAc-(1-&gt;3)-beta-D-GlcNAc-(1-&gt;4)-(O-6-P-alpha-D-Man)]-Thr-[protein] + UDP + H(+). The catalysed reaction is 3-O-{(1-&gt;[3)-alpha-D-Xyl-(1-&gt;3)-beta-D-GlcA-(1-&gt;](n)-4)-beta-D-Xyl-(1-&gt;4)-Rib-ol-P-Rib-ol-P-3-beta-D-GalNAc-(1-&gt;3)-beta-D-GlcNAc-(1-&gt;4)-O-6-P-alpha-D-Man}-L-Thr-[protein] + UDP-alpha-D-glucuronate = 3-O-{beta-D-GlcA-(1-&gt;[3)-alpha-D-Xyl-(1-&gt;3)-beta-D-GlcA-(1-&gt;](n)-4)-beta-D-Xyl-(1-&gt;4)-Rib-ol-P-Rib-ol-P-3-beta-D-GalNAc-(1-&gt;3)-beta-D-GlcNAc-(1-&gt;4)-O-6-P-alpha-D-Man}-L-Thr-[protein] + UDP + H(+). It catalyses the reaction 3-O-{beta-D-GlcA-(1-&gt;[3)-alpha-D-Xyl-(1-&gt;3)-beta-D-GlcA-(1-&gt;](n)-4)-beta-D-Xyl-(1-&gt;4)-Rib-ol-P-Rib-ol-P-3-beta-D-GalNAc-(1-&gt;3)-beta-D-GlcNAc-(1-&gt;4)-O-6-P-alpha-D-Man}-L-Thr-[protein] + UDP-alpha-D-xylose = 3-O-{(1-&gt;[3)-alpha-D-Xyl-(1-&gt;3)-beta-D-GlcA-(1-&gt;](n+1)-4)-beta-D-Xyl-(1-&gt;4)-Rib-ol-P-Rib-ol-P-3-beta-D-GalNAc-(1-&gt;3)-beta-D-GlcNAc-(1-&gt;4)-O-6-P-alpha-D-Man}-L-Thr-[protein] + UDP + H(+). Its pathway is protein modification; protein glycosylation. Bifunctional glycosyltransferase with both alpha-1,3-xylosyltransferase and beta-1,3-glucuronyltransferase activities involved in the maturation of alpha-dystroglycan (DAG1) by glycosylation leading to DAG1 binding to laminin G-like domain-containing extracellular proteins with high affinity. Elongates the glucuronyl-beta-1,4-xylose-beta disaccharide primer structure initiated by B4GAT1 by adding repeating units [-3-Xylose-alpha-1,3-GlcA-beta-1-] to produce a heteropolysaccharide. Requires the phosphorylation of core M3 (O-mannosyl trisaccharide) by POMK to elongate the glucuronyl-beta-1,4-xylose-beta disaccharide primer. Plays a key role in skeletal muscle function and regeneration. In Homo sapiens (Human), this protein is Xylosyl- and glucuronyltransferase LARGE1.